Here is a 119-residue protein sequence, read N- to C-terminus: Methylglyoxal synthase (119 aa).

Positions 1–119 (MKIALIAHDK…ESAKLIMADI (119 aa)) constitute an MGS-like domain. Residues histidine 8, lysine 12, 34–37 (TGTT), and 54–55 (SG) each bind substrate. Aspartate 60 acts as the Proton donor/acceptor in catalysis. Residue histidine 87 coordinates substrate.

It belongs to the methylglyoxal synthase family.

It catalyses the reaction dihydroxyacetone phosphate = methylglyoxal + phosphate. Catalyzes the formation of methylglyoxal from dihydroxyacetone phosphate. The protein is Methylglyoxal synthase of Clostridium perfringens (strain ATCC 13124 / DSM 756 / JCM 1290 / NCIMB 6125 / NCTC 8237 / Type A).